A 92-amino-acid chain; its full sequence is Defensin-like protein 249 (92 aa).

The first 24 residues, 1-24 (MKLAAIFLASSVLLSLLPIHLSQG), serve as a signal peptide directing secretion. 4 disulfide bridges follow: cysteine 34–cysteine 91, cysteine 45–cysteine 74, cysteine 53–cysteine 84, and cysteine 72–cysteine 86.

The protein belongs to the DEFL family.

The protein localises to the secreted. This chain is Defensin-like protein 249 (SCRL7), found in Arabidopsis thaliana (Mouse-ear cress).